Consider the following 165-residue polypeptide: Eae protein (165 aa).

In Salmonella phage P22 (Bacteriophage P22), this protein is Eae protein (eae).